A 91-amino-acid chain; its full sequence is Putative defensin-like protein 83 (91 aa).

A signal peptide spans 1–27; the sequence is MATNKFLSILLLSLMAFAAILLPMISG. Disulfide bonds link Cys32-Cys71, Cys37-Cys57, Cys43-Cys69, and Cys47-Cys70.

It belongs to the DEFL family.

Its subcellular location is the secreted. In Arabidopsis thaliana (Mouse-ear cress), this protein is Putative defensin-like protein 83 (LCR46).